Here is a 294-residue protein sequence, read N- to C-terminus: RAB7A-interacting MON1-CCZ1 complex subunit 1 (294 aa).

At A2 the chain carries N-acetylalanine.

This sequence belongs to the RIMOC1 family. In terms of assembly, interacts with the MON1A-CCZ1B complex. Interacts with GDP-bound RAB7A and promotes its interaction with the MON1A-CCZ1B complex.

Its subcellular location is the cytoplasm. It is found in the cytosol. Functionally, plays an important role in the removal of damaged mitochondria via mitophagy by controlling the stability and localization of RAB7A. Required for the recruitment of RAB7A and ATG9A vesicles to damaged mitochondria and promotes the stability of RAB7A by inhibiting its proteasomal degradation during mitophagy. This chain is RAB7A-interacting MON1-CCZ1 complex subunit 1, found in Mus musculus (Mouse).